Reading from the N-terminus, the 473-residue chain is Sucrose-6-phosphate hydrolase (473 aa).

Residues 44–47 (LLND), Q63, 106–107 (YS), 167–168 (RD), and E224 each bind substrate. The active site involves D47.

This sequence belongs to the glycosyl hydrolase 32 family.

The protein resides in the cytoplasm. The catalysed reaction is Hydrolysis of terminal non-reducing beta-D-fructofuranoside residues in beta-D-fructofuranosides.. The protein operates within glycan biosynthesis; sucrose metabolism. This Lactococcus lactis subsp. lactis (Streptococcus lactis) protein is Sucrose-6-phosphate hydrolase (scrB).